Consider the following 347-residue polypeptide: Protein RecA (347 aa).

67–74 (GPESSGKT) serves as a coordination point for ATP.

It belongs to the RecA family.

It localises to the cytoplasm. In terms of biological role, can catalyze the hydrolysis of ATP in the presence of single-stranded DNA, the ATP-dependent uptake of single-stranded DNA by duplex DNA, and the ATP-dependent hybridization of homologous single-stranded DNAs. It interacts with LexA causing its activation and leading to its autocatalytic cleavage. This chain is Protein RecA, found in Paenarthrobacter aurescens (strain TC1).